A 441-amino-acid chain; its full sequence is DNA double-strand break repair protein Mre11 (441 aa).

D9, H11, D50, and N85 together coordinate Mn(2+). The active-site Proton donor is the H86. 3 residues coordinate Mn(2+): H150, D181, and H183. Positions 360–441 (ESLLSDDPDA…SRDSSLGDFA (82 aa)) are disordered. Composition is skewed to acidic residues over residues 379-403 (AEAE…EDTA) and 411-425 (TDTD…DSET).

This sequence belongs to the MRE11/RAD32 family. In terms of assembly, homodimer. Forms a heterotetramer composed of two Mre11 subunits and two Rad50 subunits. Mn(2+) serves as cofactor.

Nuclease activity is regulated by Rad50. Its function is as follows. Part of the Rad50/Mre11 complex, which is involved in the early steps of DNA double-strand break (DSB) repair. Mre11 binds to DSB ends and has both double-stranded 3'-5' exonuclease activity and single-stranded endonuclease activity. In polyploid organisms, the Rad50/Mre11 complex appears to restrain the repair of double-strand breaks by homologous recombination, allowing another pathway to act as the primary mode of repair. The polypeptide is DNA double-strand break repair protein Mre11 (Haloferax volcanii (strain ATCC 29605 / DSM 3757 / JCM 8879 / NBRC 14742 / NCIMB 2012 / VKM B-1768 / DS2) (Halobacterium volcanii)).